The primary structure comprises 198 residues: Large ribosomal subunit protein eL19 (198 aa).

Disordered stretches follow at residues 66–85 and 150–177; these read YEEA…RGTA and KRAK…EERQ. The span at 71–83 shows a compositional bias: basic residues; sequence RKGRHTGYGKRRG. Basic and acidic residues predominate over residues 160–177; it reads QARRDKNKESRKRREERQ.

This sequence belongs to the eukaryotic ribosomal protein eL19 family.

The chain is Large ribosomal subunit protein eL19 (rpl-19) from Caenorhabditis elegans.